The primary structure comprises 91 residues: Large ribosomal subunit protein eL37 (91 aa).

Residues Cys19, Cys22, Cys34, and Cys37 each coordinate Zn(2+). The C4-type zinc finger occupies 19–37 (CRRCGKSSFHIQKKTCASC).

The protein belongs to the eukaryotic ribosomal protein eL37 family. It depends on Zn(2+) as a cofactor.

Binds to the 23S rRNA. This is Large ribosomal subunit protein eL37 (rpl37) from Dictyostelium discoideum (Social amoeba).